Reading from the N-terminus, the 258-residue chain is Small ribosomal subunit protein mS40 (258 aa).

A mitochondrion-targeting transit peptide spans 1-35; the sequence is MAASVLNTVLRRLPMLSLFRGSHRVQVPLQTLCTK. Ser-38 and Ser-49 each carry phosphoserine. The tract at residues 214–258 is disordered; it reads SRLRRLYQGHLQEESGPPPESMPKMPPRTPAEASSTGQTGPQSAL. Residues 229–242 are compositionally biased toward pro residues; the sequence is GPPPESMPKMPPRT. Over residues 245–258 the composition is skewed to polar residues; it reads EASSTGQTGPQSAL.

This sequence belongs to the bacterial ribosomal protein bS18 family. Mitochondrion-specific ribosomal protein mS40 subfamily. Component of the mitochondrial small ribosomal subunit (mt-SSU). Mature mammalian 55S mitochondrial ribosomes consist of a small (28S) and a large (39S) subunit. The 28S small subunit contains a 12S ribosomal RNA (12S mt-rRNA) and 30 different proteins. The 39S large subunit contains a 16S rRNA (16S mt-rRNA), a copy of mitochondrial valine transfer RNA (mt-tRNA(Val)), which plays an integral structural role, and 52 different proteins. mS40 has a zinc binding site.

It is found in the mitochondrion. This is Small ribosomal subunit protein mS40 (MRPS18B) from Homo sapiens (Human).